We begin with the raw amino-acid sequence, 586 residues long: Retron Ec67 protein (586 aa).

In terms of domain architecture, Reverse transcriptase spans 29–262 (FLTNVLYRIG…SRQEVTGLTV (234 aa)). 3 residues coordinate Mg(2+): Asp-120, Asp-201, and Asp-202.

This sequence belongs to the bacterial reverse transcriptase family.

It carries out the reaction DNA(n) + a 2'-deoxyribonucleoside 5'-triphosphate = DNA(n+1) + diphosphate. The enzyme catalyses Endonucleolytic cleavage to 5'-phosphomonoester.. Functionally, reverse transcriptase (RT) component of antiviral defense system retron Ec67, minimally composed of a non-coding RNA (ncRNA) and this RT. Expression of these 2 elements confers protection against bacteriophage T5. At multiplicity of infection (MOI) of 0.02 cultures grow normally when infected with T5 without collapsing, at MOI 2 cultures enter growth stasis. Responsible for synthesis of msDNA-Ec67 (a branched molecule with RNA linked by a 2',5'-phosphodiester bond to ssDNA). The retron transcript serves as primer (from a conserved internal G residue) and template for the reaction, and codes for the RT. Can use other retrons as substrate (msDNA-Mx162 and msDNA-Ec86). Also able to synthesize DNA from a DNA template at least in vitro, although the enzyme is less active with a DNA template. In Escherichia coli, this protein is Retron Ec67 protein.